The primary structure comprises 148 residues: DNA-directed RNA polymerase II subunit GRINL1A, isoforms 4/5 (148 aa).

Residues 1–66 are disordered; sequence MATPARAPES…AEFGGAAGNV (66 aa). The segment covering 53–66 has biased composition (low complexity); it reads GLGAAEFGGAAGNV.

This Homo sapiens (Human) protein is DNA-directed RNA polymerase II subunit GRINL1A, isoforms 4/5 (POLR2M).